A 453-amino-acid chain; its full sequence is Plasticin (453 aa).

The segment at 1–51 (MSHSTFSHLFSPHFGAPVYSPVSSRIGGRYVSSSVPTRSVDFRSRSSAPAP) is head. The coil 1A stretch occupies residues 71 to 112 (FATRSNEKRELQELNDRFASFIEKVRHLEQQNSKLILELGQY). The 314-residue stretch at 77–390 (EKRELQELND…KLLEGEENRI (314 aa)) folds into the IF rod domain. The tract at residues 113-126 (KDQHQGSTGRINEL) is linker 1. Positions 127-222 (CQQEMRELRR…KMHDEEIQDV (96 aa)) are coil 1B. The interval 223-245 (QVSVQSQQMKMEVMETSSRPDLT) is linker 12. The segment at 246–391 (GALRDIRAQY…LLEGEENRIV (146 aa)) is coil 2. The interval 392-453 (VPIMKMPSMS…KKDSHGQGKD (62 aa)) is tail. A disordered region spans residues 421 to 453 (IKTVETRDGEVVKESTKEKGRDEKKDSHGQGKD). Basic and acidic residues predominate over residues 424-453 (VETRDGEVVKESTKEKGRDEKKDSHGQGKD).

This sequence belongs to the intermediate filament family. Optic nerve.

Functionally, type III neurofilament. The sequence is that of Plasticin from Carassius auratus (Goldfish).